The primary structure comprises 294 residues: tRNA-uridine aminocarboxypropyltransferase 1 (294 aa).

The tract at residues 158–185 is disordered; that stretch reads DMQNDSSCEPSLKRPKCSQQYDKSKNEG. Positions 202-205 match the DXTW motif; the sequence is DSTW.

It belongs to the TDD superfamily. DTWD1 family.

The protein localises to the nucleus. The catalysed reaction is a uridine in tRNA + S-adenosyl-L-methionine = a 3-[(3S)-3-amino-3-carboxypropyl]uridine in tRNA + S-methyl-5'-thioadenosine + H(+). Functionally, catalyzes the formation of 3-(3-amino-3-carboxypropyl)uridine (acp3U) at position 20 in the D-loop of several cytoplasmic tRNAs (acp3U(20)). This Xenopus tropicalis (Western clawed frog) protein is tRNA-uridine aminocarboxypropyltransferase 1.